The sequence spans 236 residues: EP300-interacting inhibitor of differentiation 2 (236 aa).

The segment covering 1 to 15 has biased composition (polar residues); sequence MSQLPAVSSAPQTGA. The segment at 1–102 is disordered; it reads MSQLPAVSSA…REGPAAAAAS (102 aa). Composition is skewed to low complexity over residues 32 to 68 and 75 to 102; these read RALPGPARPGETRGRPMAAAREGPAAPAAAARGGRVA and AAAARGGPGAAPRGGAAAREGPAAAAAS. R63 and R79 each carry omega-N-methylarginine. Residues 170–190 adopt a coiled-coil conformation; that stretch reads RIQELEERRRRFVEACRAREA.

In terms of assembly, heterodimer with EID2B. Interacts with the C-terminus of EP300. Interacts with HDAC1 and HDAC2. Interacts with SMAD2, SMAD4 and with the MH2 domain of SMAD3. Expressed in heart, brain, kidney and pancreas. Not detected in placenta.

It localises to the nucleus. Its function is as follows. Interacts with EP300 and acts as a repressor of MYOD-dependent transcription and muscle differentiation. Inhibits EP300 histone acetyltransferase activity. Acts as a repressor of TGFB/SMAD transcriptional responses. May act as a repressor of the TGFB/SMAD3-dependent signaling by selectively blocking formation of TGFB-induced SMAD3-SMAD4 complex. The chain is EP300-interacting inhibitor of differentiation 2 from Mus musculus (Mouse).